Consider the following 391-residue polypeptide: Isochorismate synthase EntC (391 aa).

Positions 140, 142, 145, and 146 each coordinate Mg(2+). The Proton acceptor role is filled by lysine 147. Catalysis depends on glutamate 197, which acts as the Proton donor. Isochorismate is bound by residues glycine 214, serine 215, glutamate 241, alanine 303, arginine 347, and glycine 361. A Mg(2+)-binding site is contributed by glutamate 241. Glutamate 376 is a binding site for Mg(2+). Lysine 380 is an isochorismate binding site.

It belongs to the isochorismate synthase family. Monomer. Forms a specific pairwise interaction with EntB; this interaction likely facilitates substrate channeling to connect the EntB and EntC active sites. Mg(2+) is required as a cofactor.

The enzyme catalyses chorismate = isochorismate. It functions in the pathway siderophore biosynthesis; enterobactin biosynthesis. In terms of biological role, involved in the biosynthesis of the siderophore enterobactin (macrocyclic trimeric lactone of N-(2,3-dihydroxybenzoyl)-serine). Catalyzes the reversible conversion of chorismate to isochorismate. In Escherichia coli O157:H7, this protein is Isochorismate synthase EntC.